Reading from the N-terminus, the 306-residue chain is Agmatinase (306 aa).

Mn(2+) contacts are provided by His128, Asp151, His153, Asp155, Asp232, and Asp234.

This sequence belongs to the arginase family. Agmatinase subfamily. Mn(2+) serves as cofactor.

The enzyme catalyses agmatine + H2O = urea + putrescine. The protein operates within amine and polyamine biosynthesis; putrescine biosynthesis via agmatine pathway; putrescine from agmatine: step 1/1. Its function is as follows. Catalyzes the formation of putrescine from agmatine. In Proteus mirabilis, this protein is Agmatinase (speB).